Consider the following 78-residue polypeptide: Omega-conotoxin-like Ac6.5 (78 aa).

The first 22 residues, 1-22 (MKLTCVVIVAVLLLTACQLLTA), serve as a signal peptide directing secretion. Residues 23–42 (DDSRGTQKHRSLRSTTKVSK) constitute a propeptide that is removed on maturation. Disulfide bonds link Cys-46–Cys-62, Cys-53–Cys-65, and Cys-61–Cys-72. 4-hydroxyproline occurs at positions 55 and 67.

This sequence belongs to the conotoxin O1 superfamily. As to expression, expressed by the venom duct.

It is found in the secreted. Its function is as follows. Omega-conotoxins act at presynaptic membranes, they bind and block voltage-gated calcium channels (Cav). The chain is Omega-conotoxin-like Ac6.5 from Conus achatinus (Little frog cone).